A 258-amino-acid chain; its full sequence is Serine protease VLSP-3 (258 aa).

The N-terminal stretch at 1–18 (MVLIRVLANLLVLQLSYA) is a signal peptide. The propeptide occupies 19–24 (QKSSEL). In terms of domain architecture, Peptidase S1 spans 25–249 (VIGGDECNIN…YTDWIQSIIA (225 aa)). 6 disulfide bridges follow: cysteine 31/cysteine 163, cysteine 50/cysteine 66, cysteine 98/cysteine 256, cysteine 142/cysteine 210, cysteine 174/cysteine 189, and cysteine 200/cysteine 225. A glycan (N-linked (GlcNAc...) asparagine) is linked at asparagine 44. Histidine 65 functions as the Charge relay system in the catalytic mechanism. N-linked (GlcNAc...) asparagine glycans are attached at residues asparagine 79 and asparagine 103. Aspartate 110 serves as the catalytic Charge relay system. Asparagine 154 and asparagine 170 each carry an N-linked (GlcNAc...) asparagine glycan. Catalysis depends on serine 204, which acts as the Charge relay system. A glycan (N-linked (GlcNAc...) asparagine) is linked at asparagine 251.

Belongs to the peptidase S1 family. Snake venom subfamily. In terms of assembly, monomer. In terms of tissue distribution, expressed by the venom gland.

The protein localises to the secreted. Snake venom serine protease that may act in the hemostasis system of the prey. This Macrovipera lebetinus (Levantine viper) protein is Serine protease VLSP-3.